The sequence spans 229 residues: Trypsin (229 aa).

A propeptide spans 1-7 (APDDDDK) (activation peptide). The region spanning 8–227 (IVGGYECPKH…YVSWIHETIA (220 aa)) is the Peptidase S1 domain. Cystine bridges form between Cys14–Cys143, Cys32–Cys48, Cys116–Cys216, Cys123–Cys189, Cys154–Cys168, and Cys179–Cys203. His47 functions as the Charge relay system in the catalytic mechanism. Ca(2+) is bound by residues Glu59 and Glu69. Asp91 functions as the Charge relay system in the catalytic mechanism. Ser183 acts as the Charge relay system in catalysis.

Belongs to the peptidase S1 family. Requires Ca(2+) as cofactor.

The protein localises to the secreted. It is found in the extracellular space. The catalysed reaction is Preferential cleavage: Arg-|-Xaa, Lys-|-Xaa.. This chain is Trypsin, found in Squalus acanthias (Spiny dogfish).